Here is a 390-residue protein sequence, read N- to C-terminus: Chalcone synthase (390 aa).

The active site involves C164.

The protein belongs to the thiolase-like superfamily. Chalcone/stilbene synthases family.

It carries out the reaction (E)-4-coumaroyl-CoA + 3 malonyl-CoA + 3 H(+) = 2',4,4',6'-tetrahydroxychalcone + 3 CO2 + 4 CoA. It functions in the pathway secondary metabolite biosynthesis; flavonoid biosynthesis. Functionally, the primary product of this enzyme is 4,2',4',6'-tetrahydroxychalcone (also termed naringenin-chalcone or chalcone) which can under specific conditions spontaneously isomerize into naringenin. The sequence is that of Chalcone synthase (CHS) from Onobrychis viciifolia (Common sainfoin).